The following is a 567-amino-acid chain: TGF-beta receptor type-2 (567 aa).

A signal peptide spans 1–23; it reads MGRGLLRGLWPLHIVLWTRIAST. The Extracellular segment spans residues 24–166; the sequence is IPPHVPKSVN…SPDLLLVIIQ (143 aa). Cystine bridges form between C51-C84, C54-C71, C61-C67, C77-C101, C121-C136, and C138-C143. 2 N-linked (GlcNAc...) asparagine glycosylation sites follow: N70 and N94. Residues 167–187 traverse the membrane as a helical segment; the sequence is VTGVSLLPPLGIAIAVIAIFY. Topologically, residues 188–567 are cytoplasmic; that stretch reads CYRVHRQQKL…PEDGSLNTTK (380 aa). The Protein kinase domain occupies 244–546; sequence IELDTLVGKG…RFSELEHPDR (303 aa). ATP contacts are provided by residues 250–258 and K277; that span reads VGKGRFAEV. D379 serves as the catalytic Proton acceptor. A phosphoserine mark is found at S409, S548, and S553. A disordered region spans residues 546-567; it reads RLSGRSCSQEKIPEDGSLNTTK.

Belongs to the protein kinase superfamily. TKL Ser/Thr protein kinase family. TGFB receptor subfamily. In terms of assembly, homodimer. Heterohexamer; TGFB1, TGFB2 and TGFB3 homodimeric ligands assemble a functional receptor composed of two TGFBR1 and TGFBR2 heterodimers to form a ligand-receptor heterohexamer. The respective affinity of TGFRB1 and TGFRB2 for the ligands may modulate the kinetics of assembly of the receptor and may explain the different biological activities of TGFB1, TGFB2 and TGFB3. Component of a complex composed of TSC22D1 (via N-terminus), TGFBR1 and TGFBR2; the interaction between TSC22D1 and TGFBR1 is inhibited by SMAD7 and promoted by TGFB1. Interacts with DAXX. Interacts with DYNLT4. Interacts with ZFYVE9; ZFYVE9 recruits SMAD2 and SMAD3 to the TGF-beta receptor. Interacts with and is activated by SCUBE3; this interaction does not affect TGFB1-binding to TGFBR2. Interacts with VPS39; this interaction is independent of the receptor kinase activity and of the presence of TGF-beta. Interacts with CLU. Mg(2+) serves as cofactor. It depends on Mn(2+) as a cofactor. In terms of processing, phosphorylated on a Ser/Thr residue in the cytoplasmic domain.

It localises to the cell membrane. It is found in the membrane raft. The enzyme catalyses L-threonyl-[receptor-protein] + ATP = O-phospho-L-threonyl-[receptor-protein] + ADP + H(+). The catalysed reaction is L-seryl-[receptor-protein] + ATP = O-phospho-L-seryl-[receptor-protein] + ADP + H(+). Transmembrane serine/threonine kinase forming with the TGF-beta type I serine/threonine kinase receptor, TGFBR1, the non-promiscuous receptor for the TGF-beta cytokines TGFB1, TGFB2 and TGFB3. Transduces the TGFB1, TGFB2 and TGFB3 signal from the cell surface to the cytoplasm and is thus regulating a plethora of physiological and pathological processes including cell cycle arrest in epithelial and hematopoietic cells, control of mesenchymal cell proliferation and differentiation, wound healing, extracellular matrix production, immunosuppression and carcinogenesis. The formation of the receptor complex composed of 2 TGFBR1 and 2 TGFBR2 molecules symmetrically bound to the cytokine dimer results in the phosphorylation and the activation of TGFRB1 by the constitutively active TGFBR2. Activated TGFBR1 phosphorylates SMAD2 which dissociates from the receptor and interacts with SMAD4. The SMAD2-SMAD4 complex is subsequently translocated to the nucleus where it modulates the transcription of the TGF-beta-regulated genes. This constitutes the canonical SMAD-dependent TGF-beta signaling cascade. Also involved in non-canonical, SMAD-independent TGF-beta signaling pathways. In Rattus norvegicus (Rat), this protein is TGF-beta receptor type-2 (Tgfbr2).